Reading from the N-terminus, the 297-residue chain is Putative S-adenosyl-L-methionine-dependent methyltransferase Mjls_1072 (297 aa).

Residues D124 and 153–154 (DL) each bind S-adenosyl-L-methionine.

It belongs to the UPF0677 family.

Functionally, exhibits S-adenosyl-L-methionine-dependent methyltransferase activity. The polypeptide is Putative S-adenosyl-L-methionine-dependent methyltransferase Mjls_1072 (Mycobacterium sp. (strain JLS)).